Reading from the N-terminus, the 107-residue chain is Nucleoid-associated protein A1I_00660 (107 aa).

The interval 81–107 is disordered; sequence KCDSDSQNSMSGALSGMSLPPGFKMPF.

It belongs to the YbaB/EbfC family. As to quaternary structure, homodimer.

Its subcellular location is the cytoplasm. The protein resides in the nucleoid. In terms of biological role, binds to DNA and alters its conformation. May be involved in regulation of gene expression, nucleoid organization and DNA protection. In Rickettsia bellii (strain OSU 85-389), this protein is Nucleoid-associated protein A1I_00660.